We begin with the raw amino-acid sequence, 499 residues long: NAD(P)H-quinone oxidoreductase chain 4, chloroplastic (499 aa).

The next 14 membrane-spanning stretches (helical) occupy residues 4 to 24, 35 to 55, 84 to 104, 111 to 129, 134 to 154, 167 to 187, 208 to 228, 242 to 262, 272 to 292, 305 to 325, 330 to 350, 386 to 406, 416 to 436, and 462 to 482; these read FPWLTLIVVFPIAAGSLIFFL, YTIYICVLELLLTTYAFCYNF, GLSIGPILLTGFITTLATLAA, SRLFHFLMLAMYSGQIGSF, LLLFFIMWELELIPVYLLLSV, FILYTAGGSVFLLIGVLGIGL, ALEIIFYIGFFIAFAVKLPII, HYSTCMLLAGILLKMGAYGLI, AHSIFSPWFMIVGTVQIIYAA, IAYSSVSHMGFIILGIGSITD, GAVLQIISHGLISAALFFLAG, LALPGMSGFVAELIVFFGIIT, IVITFVMAIGMILTPIYSLSM, and LFVLISILLPVIGIGIYPDFV.

Belongs to the complex I subunit 4 family.

It localises to the plastid. The protein resides in the chloroplast thylakoid membrane. It catalyses the reaction a plastoquinone + NADH + (n+1) H(+)(in) = a plastoquinol + NAD(+) + n H(+)(out). The enzyme catalyses a plastoquinone + NADPH + (n+1) H(+)(in) = a plastoquinol + NADP(+) + n H(+)(out). The sequence is that of NAD(P)H-quinone oxidoreductase chain 4, chloroplastic from Citrus sinensis (Sweet orange).